The primary structure comprises 1129 residues: Nuclear pore complex protein 15 (1129 aa).

The protein belongs to the nucleoporin Nup133 family.

Its subcellular location is the nucleus envelope. The protein resides in the nucleus. It is found in the nuclear pore complex. Important for early nematode development. This chain is Nuclear pore complex protein 15, found in Caenorhabditis elegans.